The primary structure comprises 555 residues: CTP synthase (555 aa).

The tract at residues 1–271 (MVKRGKKTKY…DDKLAELFNI (271 aa)) is amidoligase domain. A CTP-binding site is contributed by Ser-19. Residue Ser-19 coordinates UTP. ATP is bound by residues 20–25 (SLGKGL) and Asp-77. Residues Asp-77 and Glu-145 each contribute to the Mg(2+) site. Residues 152–154 (DIE), 192–197 (KTKPTQ), and Lys-228 each bind CTP. UTP is bound by residues 192–197 (KTKPTQ) and Lys-228. The Glutamine amidotransferase type-1 domain maps to 297 to 538 (RVGVVGKYVE…VHAAREQRDQ (242 aa)). Gly-358 serves as a coordination point for L-glutamine. Cys-385 acts as the Nucleophile; for glutamine hydrolysis in catalysis. Residues 386 to 389 (LGLQ), Glu-409, and Arg-466 contribute to the L-glutamine site. Active-site residues include His-511 and Glu-513.

This sequence belongs to the CTP synthase family. As to quaternary structure, homotetramer.

The catalysed reaction is UTP + L-glutamine + ATP + H2O = CTP + L-glutamate + ADP + phosphate + 2 H(+). It carries out the reaction L-glutamine + H2O = L-glutamate + NH4(+). It catalyses the reaction UTP + NH4(+) + ATP = CTP + ADP + phosphate + 2 H(+). The protein operates within pyrimidine metabolism; CTP biosynthesis via de novo pathway; CTP from UDP: step 2/2. Its activity is regulated as follows. Allosterically activated by GTP, when glutamine is the substrate; GTP has no effect on the reaction when ammonia is the substrate. The allosteric effector GTP functions by stabilizing the protein conformation that binds the tetrahedral intermediate(s) formed during glutamine hydrolysis. Inhibited by the product CTP, via allosteric rather than competitive inhibition. Functionally, catalyzes the ATP-dependent amination of UTP to CTP with either L-glutamine or ammonia as the source of nitrogen. Regulates intracellular CTP levels through interactions with the four ribonucleotide triphosphates. This Anaeromyxobacter sp. (strain Fw109-5) protein is CTP synthase.